Consider the following 683-residue polypeptide: Kinesin-like protein KIF2B (683 aa).

Residue Thr125 is modified to Phosphothreonine; by PLK1. The stretch at Leu141–Arg176 forms a coiled coil. Ser204 carries the phosphoserine; by PLK1 modification. The region spanning Arg213–Ile543 is the Kinesin motor domain. Residue Gly303–Thr310 participates in ATP binding. Residues Gln640–His672 adopt a coiled-coil conformation.

This sequence belongs to the TRAFAC class myosin-kinesin ATPase superfamily. Kinesin family. MCAK/KIF2 subfamily. Phosphorylation at Thr-125 by PLK1 is required for activity in the correction of kinetochore-microtubules attachment errors, while phosphorylation at Ser-204 also by PLK1 is required for the kinetochore localization and activity in prometaphase.

The protein resides in the cytoplasm. It is found in the cytoskeleton. It localises to the microtubule organizing center. Its subcellular location is the centrosome. The protein localises to the spindle. The protein resides in the chromosome. It is found in the centromere. It localises to the kinetochore. In terms of biological role, plus end-directed microtubule-dependent motor required for spindle assembly and chromosome movement during mitosis. Has microtubule depolymerization activity. Plays a role in chromosome congression. In Bos taurus (Bovine), this protein is Kinesin-like protein KIF2B.